We begin with the raw amino-acid sequence, 1405 residues long: DNA-directed RNA polymerase subunit beta' (1405 aa).

4 residues coordinate Zn(2+): C70, C72, C85, and C88. Mg(2+)-binding residues include D460, D462, and D464. Zn(2+) is bound by residues C814, C888, C895, and C898.

It belongs to the RNA polymerase beta' chain family. In terms of assembly, the RNAP catalytic core consists of 2 alpha, 1 beta, 1 beta' and 1 omega subunit. When a sigma factor is associated with the core the holoenzyme is formed, which can initiate transcription. The cofactor is Mg(2+). It depends on Zn(2+) as a cofactor.

The enzyme catalyses RNA(n) + a ribonucleoside 5'-triphosphate = RNA(n+1) + diphosphate. In terms of biological role, DNA-dependent RNA polymerase catalyzes the transcription of DNA into RNA using the four ribonucleoside triphosphates as substrates. The sequence is that of DNA-directed RNA polymerase subunit beta' from Shewanella sediminis (strain HAW-EB3).